The primary structure comprises 194 residues: FK506-binding protein 3 (194 aa).

The N-terminal stretch at 1 to 19 (MNKFLIALLVLATLAVSFS) is a signal peptide. One can recognise a PPIase FKBP-type domain in the interval 44–133 (GDYISLKYVG…YFDLEVVSIE (90 aa)). A helical membrane pass occupies residues 148 to 168 (VGTIIAFSMLAGFIVLVKFII). The tract at residues 173–194 (DESNSKKPAPGKPKKTKAAKQN) is disordered. Residues 184–194 (KPKKTKAAKQN) are compositionally biased toward basic residues.

The protein belongs to the FKBP-type PPIase family.

It is found in the membrane. It catalyses the reaction [protein]-peptidylproline (omega=180) = [protein]-peptidylproline (omega=0). Inhibited by both FK506 and rapamycin. Its function is as follows. PPIases accelerate the folding of proteins by catalyzing the cis-trans isomerization of proline imidic peptide bonds in oligopeptides. The chain is FK506-binding protein 3 (fkbp3) from Dictyostelium discoideum (Social amoeba).